Here is a 734-residue protein sequence, read N- to C-terminus: Photosystem I P700 chlorophyll a apoprotein A2 (734 aa).

8 helical membrane-spanning segments follow: residues 46–69 (IFASHFGQLAIIFLWTSGNLFHVA), 135–158 (LYTGALFLLFLSAISLIAGWLHLQ), 175–199 (LNHHLSGLFGVSSLAWTGHLVHVAI), 273–291 (IAHHHLAIAFIFLVAGHMY), 330–353 (IHFQLGLALASLGVITSLVAQHMY), 369–395 (AALYTHHQYIAGFIMTGAFAHGAIFFI), 417–439 (AIISHLSWASLFLGFHTLGLYVH), and 517–535 (FLVHHAIALGLHTTTLILV). Residues cysteine 559 and cysteine 568 each contribute to the [4Fe-4S] cluster site. Transmembrane regions (helical) follow at residues 575-596 (AFYLAVFWMLNTIGWVTFYWHW) and 643-665 (LSVWAWMFLFGHLVWATGFMFLI). Histidine 654, methionine 662, and tyrosine 670 together coordinate chlorophyll a. Tryptophan 671 lines the phylloquinone pocket. Residues 707–727 (LVGLAHFSVGYIFTYAAFLIA) form a helical membrane-spanning segment.

Belongs to the PsaA/PsaB family. In terms of assembly, the PsaA/B heterodimer binds the P700 chlorophyll special pair and subsequent electron acceptors. PSI consists of a core antenna complex that captures photons, and an electron transfer chain that converts photonic excitation into a charge separation. The eukaryotic PSI reaction center is composed of at least 11 subunits. Requires P700 is a chlorophyll a/chlorophyll a' dimer, A0 is one or more chlorophyll a, A1 is one or both phylloquinones and FX is a shared 4Fe-4S iron-sulfur center. as cofactor.

It localises to the plastid. It is found in the chloroplast thylakoid membrane. It carries out the reaction reduced [plastocyanin] + hnu + oxidized [2Fe-2S]-[ferredoxin] = oxidized [plastocyanin] + reduced [2Fe-2S]-[ferredoxin]. PsaA and PsaB bind P700, the primary electron donor of photosystem I (PSI), as well as the electron acceptors A0, A1 and FX. PSI is a plastocyanin-ferredoxin oxidoreductase, converting photonic excitation into a charge separation, which transfers an electron from the donor P700 chlorophyll pair to the spectroscopically characterized acceptors A0, A1, FX, FA and FB in turn. Oxidized P700 is reduced on the lumenal side of the thylakoid membrane by plastocyanin. In Eucalyptus globulus subsp. globulus (Tasmanian blue gum), this protein is Photosystem I P700 chlorophyll a apoprotein A2.